The chain runs to 386 residues: Lipid-A-disaccharide synthase (386 aa).

This sequence belongs to the LpxB family.

The enzyme catalyses a lipid X + a UDP-2-N,3-O-bis[(3R)-3-hydroxyacyl]-alpha-D-glucosamine = a lipid A disaccharide + UDP + H(+). Its pathway is bacterial outer membrane biogenesis; LPS lipid A biosynthesis. In terms of biological role, condensation of UDP-2,3-diacylglucosamine and 2,3-diacylglucosamine-1-phosphate to form lipid A disaccharide, a precursor of lipid A, a phosphorylated glycolipid that anchors the lipopolysaccharide to the outer membrane of the cell. The protein is Lipid-A-disaccharide synthase of Chromobacterium violaceum (strain ATCC 12472 / DSM 30191 / JCM 1249 / CCUG 213 / NBRC 12614 / NCIMB 9131 / NCTC 9757 / MK).